The primary structure comprises 354 residues: Multiple sugar-binding periplasmic receptor ChvE (354 aa).

The signal sequence occupies residues 1–25 (MKSIISLTAAAAIGVAMFVAPAFAA).

This sequence belongs to the bacterial solute-binding protein 2 family.

It is found in the periplasm. In terms of biological role, required for effective transcriptional induction of the vir genes by monosaccharides in response to plant signals and for normal growth and chemotaxis towards certain sugars. Functions as a periplasmic multiple sugar-binding receptor protein. It does not interact with a transport system. In Rhizobium radiobacter (Agrobacterium tumefaciens), this protein is Multiple sugar-binding periplasmic receptor ChvE (chvE).